The chain runs to 448 residues: MKKLYIKTFGCQMNEYDSGKMADLLHADEGMVMTDTPEDADVVLLNTCSIREKAEDKVFSDLGRLRELKKTKPHMLIGVGGCVASQEGRQIVSRAPYVDVVFGPQTLHRLSDLIAQRRKTGLSQVDISFPEIEKFDHLPASRQTRGSAYVSIMEGCSKYCSYCVVPYTRGEEVSRPFDDVLTEVAGLASKGVKEIVLLGQNVNAYLGKMGDAEEIADFALLIEYIAEIPGVERIRFTTSHPKEFTQRLIDVYAKVPKLVSHLHLPVQHGSDSILSAMKRGYTALEYKSIIRKMRAVRPDLTLSSDFIVGFPGETDADFEKLLKMVQELDFDNSFCFIFSPRPGTPAANLSDDTPYEVKLKRLQTLLALIEGQSNQISQKMLGKTERVLIEGLAKDGVNLQGRAENNRVIHFSPPDQNIDGLIGEMVDIRITEVLNYTLRGELVETHVI.

Residues 2–119 enclose the MTTase N-terminal domain; it reads KKLYIKTFGC…LSDLIAQRRK (118 aa). [4Fe-4S] cluster is bound by residues Cys11, Cys48, Cys82, Cys156, Cys160, and Cys163. One can recognise a Radical SAM core domain in the interval 142-375; the sequence is RQTRGSAYVS…LALIEGQSNQ (234 aa). Residues 378-444 enclose the TRAM domain; the sequence is QKMLGKTERV…NYTLRGELVE (67 aa).

This sequence belongs to the methylthiotransferase family. MiaB subfamily. Monomer. [4Fe-4S] cluster is required as a cofactor.

It localises to the cytoplasm. The catalysed reaction is N(6)-dimethylallyladenosine(37) in tRNA + (sulfur carrier)-SH + AH2 + 2 S-adenosyl-L-methionine = 2-methylsulfanyl-N(6)-dimethylallyladenosine(37) in tRNA + (sulfur carrier)-H + 5'-deoxyadenosine + L-methionine + A + S-adenosyl-L-homocysteine + 2 H(+). In terms of biological role, catalyzes the methylthiolation of N6-(dimethylallyl)adenosine (i(6)A), leading to the formation of 2-methylthio-N6-(dimethylallyl)adenosine (ms(2)i(6)A) at position 37 in tRNAs that read codons beginning with uridine. In Polynucleobacter asymbioticus (strain DSM 18221 / CIP 109841 / QLW-P1DMWA-1) (Polynucleobacter necessarius subsp. asymbioticus), this protein is tRNA-2-methylthio-N(6)-dimethylallyladenosine synthase.